A 123-amino-acid chain; its full sequence is Putative membrane protein insertion efficiency factor (123 aa).

Residues 1 to 23 (MGSCGGKHTGKGAPKPYSRNFTD) form a disordered region.

The protein belongs to the UPF0161 family.

Its subcellular location is the cell inner membrane. Functionally, could be involved in insertion of integral membrane proteins into the membrane. The protein is Putative membrane protein insertion efficiency factor of Brucella abortus (strain 2308).